Here is a 436-residue protein sequence, read N- to C-terminus: Probable sodium/metabolite cotransporter BASS4, chloroplastic (436 aa).

The N-terminal 47 residues, 1–47, are a transit peptide targeting the chloroplast; that stretch reads MAIASTLASTQNPFLCLRQPPSPGNRSVVFRRCQDPCGRRWISRSIR. A run of 9 helical transmembrane segments spans residues 109–129, 131–151, 157–177, 195–215, 225–245, 257–277, 297–314, 328–348, and 403–423; these read FLPL…TLGC, ADKY…SGLT, IGAA…ILLL, LVTG…GVAL, LALA…PFWV, FPTD…LIIG, LFSK…WIQV, VFLA…AFNA, and PCVA…NLWL.

The protein belongs to the bile acid:sodium symporter (BASS) (TC 2.A.28) family.

The protein localises to the membrane. The protein resides in the plastid. It is found in the chloroplast envelope. Functionally, may function as sodium-coupled metabolite transporter across the chloroplast envelope. The protein is Probable sodium/metabolite cotransporter BASS4, chloroplastic (BASS4) of Arabidopsis thaliana (Mouse-ear cress).